A 270-amino-acid chain; its full sequence is Cerberus (270 aa).

The first 20 residues, 1–20 (MLLNVLRICIIVCLVNDGAG), serve as a signal peptide directing secretion. Residues asparagine 103, asparagine 112, and asparagine 154 are each glycosylated (N-linked (GlcNAc...) asparagine). Disulfide bonds link cysteine 169–cysteine 215, cysteine 183–cysteine 229, cysteine 193–cysteine 245, and cysteine 197–cysteine 247. A CTCK domain is found at 169–253 (CKTLPFTQNI…ECTCEAHKSN (85 aa)). The N-linked (GlcNAc...) asparagine glycan is linked to asparagine 228.

Belongs to the DAN family. In terms of assembly, the long chain interacts with nodal/nr-1, bmp4 and wnt8, thereby inhibiting their function. The short chain interacts with nodal/nr-1 but not bmp4 or wnt8. In terms of tissue distribution, a component of the Nieuwkoop signaling center in the blastula. Expressed transiently in a broad anterior domain of the gastrula, including the anterior endoderm of the Spemann's organizer and more laterally the cardiac primordia. Expression is excluded from the prospective prechordal plate region and the ring of cells that give rise to the trunk-tail mesoderm.

It localises to the secreted. Inhibits wnt, nodal/nr-1 and bmp signaling in the embryo to promote head formation and anterior neural induction. Within the endoderm, acts as an essential mediator of nodal/nr-1-induced cardiogenesis in the overlying mesoderm. The sequence is that of Cerberus from Xenopus laevis (African clawed frog).